We begin with the raw amino-acid sequence, 312 residues long: tRNA pseudouridine synthase B (312 aa).

Asp-48 serves as the catalytic Nucleophile.

This sequence belongs to the pseudouridine synthase TruB family. Type 1 subfamily.

It catalyses the reaction uridine(55) in tRNA = pseudouridine(55) in tRNA. In terms of biological role, responsible for synthesis of pseudouridine from uracil-55 in the psi GC loop of transfer RNAs. The sequence is that of tRNA pseudouridine synthase B from Haemophilus influenzae (strain ATCC 51907 / DSM 11121 / KW20 / Rd).